The following is a 319-amino-acid chain: Beta-ketoacyl-[acyl-carrier-protein] synthase III (319 aa).

Catalysis depends on residues Cys115 and His246. Residues 247 to 251 (QANLR) are ACP-binding. Asn276 is a catalytic residue.

The protein belongs to the thiolase-like superfamily. FabH family. Homodimer.

The protein resides in the cytoplasm. It catalyses the reaction malonyl-[ACP] + acetyl-CoA + H(+) = 3-oxobutanoyl-[ACP] + CO2 + CoA. The protein operates within lipid metabolism; fatty acid biosynthesis. In terms of biological role, catalyzes the condensation reaction of fatty acid synthesis by the addition to an acyl acceptor of two carbons from malonyl-ACP. Catalyzes the first condensation reaction which initiates fatty acid synthesis and may therefore play a role in governing the total rate of fatty acid production. Possesses both acetoacetyl-ACP synthase and acetyl transacylase activities. Its substrate specificity determines the biosynthesis of branched-chain and/or straight-chain of fatty acids. The sequence is that of Beta-ketoacyl-[acyl-carrier-protein] synthase III from Coxiella burnetii (strain Dugway 5J108-111).